The following is a 307-amino-acid chain: E3 ubiquitin-protein ligase PHF7 (307 aa).

The C2HC pre-PHD-type zinc finger occupies 30–68; the sequence is SPVCLLCLQEPGDPEKLGEFLQKDNLCVHYFCLILSSRL. Residues C33, C36, H58, and C61 each contribute to the Zn(2+) site. The interval 67 to 92 is required for interaction and ubiquitination of the nucleosome core particle; the sequence is RLPQKGQPNRGLHGFMPEDIKREAVR. Residues 96–145 form a PHD-type zinc finger; the sequence is KICFVCKKKGAAIRCQNDQCVQNFHLPCGQERGCLSQFFGEYKSYCRKHR. C98, C101, C110, C115, H120, C123, C141, H144, C160, C163, C179, C180, H186, C189, C204, C207, C248, C253, C273, C276, H282, C285, C297, and C300 together coordinate Zn(2+). The required for interaction with ubiquitinated UBE2D2 stretch occupies residues 150-307; the sequence is IHQGSLGEES…NECLPASTTS (158 aa). Residues 160 to 208 form an RING-type; degenerate zinc finger; that stretch reads CVLCCENLSRTSVENIQSPCCSQAIYHRKCIQKYAHTSAKHFFKCPQCN. The segment at 244 to 301 is required for association with and ubiquitination of H3; that stretch reads RYRHCDAPICLYEQGRDSFEDEGRWRLILCATCGSHGTHRDCSSLRPNSKKWECNECL.

As to quaternary structure, interacts with MEF2C; the interaction promotes MEF2C binding to its transcription targets. Interacts with GATA4; the interaction promotes GATA4 binding to its transcription targets. Interacts with UBE2D2; the interaction inhibits cleavage of PHF7 and promotes association of the complex with the nucleosome core particle. Expressed in Leydig cells and in developing spermatids (at protein level). Highly expressed in Sertoli cells in testis.

It localises to the nucleus. It carries out the reaction S-ubiquitinyl-[E2 ubiquitin-conjugating enzyme]-L-cysteine + [acceptor protein]-L-lysine = [E2 ubiquitin-conjugating enzyme]-L-cysteine + N(6)-ubiquitinyl-[acceptor protein]-L-lysine.. It participates in protein modification; protein ubiquitination. In terms of biological role, E3 ubiquitin-protein ligase which ubiquitinates histone H3 at 'Lys-14'. Required for male fertility, via inhibition of SPOP-mediated BRDT degradation when in the presence of acetylated histone H4 in early condensing spermatids. Stabilization of BRDT allows it to facilitate histone removal in early condensing spermatids and promote the progression of histone-to-protamine exchange. Promotes the expression of steroidogenesis proteins in the testes, and as a result plays a role in maintaining testosterone levels and repressing osteoclastogenesis. Promotes transcription of cardiac enhancer genes by facilitating binding of cardiac transcription factors such as MEF2C and GATA4 to target gene promoters. Ubiquitinates histone H4. Ubiquitinates histone H2A and H3 as part of the nucleosome core particle. The sequence is that of E3 ubiquitin-protein ligase PHF7 from Mus musculus (Mouse).